Reading from the N-terminus, the 232-residue chain is Large ribosomal subunit protein uL3 (232 aa).

The protein belongs to the universal ribosomal protein uL3 family. As to quaternary structure, part of the 50S ribosomal subunit. Forms a cluster with proteins L14 and L19.

Its function is as follows. One of the primary rRNA binding proteins, it binds directly near the 3'-end of the 23S rRNA, where it nucleates assembly of the 50S subunit. The chain is Large ribosomal subunit protein uL3 from Hydrogenobaculum sp. (strain Y04AAS1).